The following is a 307-amino-acid chain: Hepatitis A virus cellular receptor 1 homolog (307 aa).

The N-terminal stretch at methionine 1 to serine 21 is a signal peptide. In terms of domain architecture, Ig-like V-type spans tyrosine 22–serine 124. Topologically, residues tyrosine 22–glycine 235 are extracellular. Intrachain disulfides connect cysteine 37–cysteine 108, cysteine 49–cysteine 60, and cysteine 55–cysteine 107. Positions proline 129 to threonine 177 are disordered. Positions proline 139–threonine 175 are enriched in low complexity. Asparagine 206 carries an N-linked (GlcNAc...) asparagine glycan. A helical membrane pass occupies residues phenylalanine 236 to valine 256. Over threonine 257–glutamate 307 the chain is Cytoplasmic.

It belongs to the immunoglobulin superfamily. TIM family. In terms of assembly, interacts with STAM. Interacts with SELPLG. As to expression, expressed at a low level in normal kidney but are increased dramatically in postischemic kidney. Expressed in proliferating bromodeoxyuridine-positive and dedifferentiated vimentin-positive epithelial cells in regenerating proximal tubules.

The protein resides in the cell membrane. In terms of biological role, phosphatidylserine receptor that plays an important functional role in regulatory B-cells homeostasis including generation, expansion and suppressor functions. As P-selectin/SELPLG ligand, plays a specialized role in activated but not naive T-cell trafficking during inflammatory responses. Controls thereby T-cell accumulation in the inflamed central nervous system (CNS) and the induction of autoimmune disease. Also regulates expression of various anti-inflammatory cytokines and co-inhibitory ligands including IL10. Acts as a regulator of T-cell proliferation. May play a role in kidney injury and repair. The protein is Hepatitis A virus cellular receptor 1 homolog (Havcr1) of Rattus norvegicus (Rat).